The primary structure comprises 735 residues: Diacylglycerol kinase alpha (735 aa).

EF-hand domains follow at residues arginine 110–valine 145 and glutamate 155–leucine 190. Ca(2+) contacts are provided by aspartate 123, aspartate 125, asparagine 127, glutamate 134, aspartate 168, aspartate 170, serine 172, serine 174, and glutamate 179. Phorbol-ester/DAG-type zinc fingers lie at residues glutamine 205–cysteine 253 and serine 269–cysteine 319. A DAGKc domain is found at proline 372–proline 506. Lysine 484 is modified (N6-acetyllysine).

Belongs to the eukaryotic diacylglycerol kinase family. As to quaternary structure, monomer. Expressed in lymphocytes.

It localises to the cytoplasm. The protein localises to the cytosol. The catalysed reaction is a 1,2-diacyl-sn-glycerol + ATP = a 1,2-diacyl-sn-glycero-3-phosphate + ADP + H(+). It catalyses the reaction a 1-O-alkyl-sn-glycerol + ATP = a 1-O-alkyl-sn-glycero-3-phosphate + ADP + H(+). It carries out the reaction 1-O-alkyl-2-acyl-sn-glycerol + ATP = 1-O-alkyl-2-acyl-sn-glycero-3-phosphate + ADP + H(+). The enzyme catalyses 1,2-dihexadecanoyl-sn-glycerol + ATP = 1,2-dihexadecanoyl-sn-glycero-3-phosphate + ADP + H(+). The catalysed reaction is 1-hexadecanoyl-2-(9Z-octadecenoyl)-sn-glycerol + ATP = 1-hexadecanoyl-2-(9Z-octadecenoyl)-sn-glycero-3-phosphate + ADP + H(+). It catalyses the reaction 2-(9Z-octadecenoyl)-glycerol + ATP = 2-(9Z-octadecenoyl)-sn-glycero-3-phosphate + ADP + H(+). It carries out the reaction 1,2-di-(9Z-octadecenoyl)-sn-glycerol + ATP = 1,2-di-(9Z-octadecenoyl)-sn-glycero-3-phosphate + ADP + H(+). The enzyme catalyses 1-octadecanoyl-2-(5Z,8Z,11Z,14Z-eicosatetraenoyl)-sn-glycerol + ATP = 1-octadecanoyl-2-(5Z,8Z,11Z,14Z-eicosatetraenoyl)-sn-glycero-3-phosphate + ADP + H(+). The catalysed reaction is 1,2-didecanoyl-sn-glycerol + ATP = 1,2-didecanoyl-sn-glycero-3-phosphate + ADP + H(+). It catalyses the reaction 1-O-hexadecyl-2-acetyl-sn-glycerol + ATP = 1-O-hexadecyl-2-acetyl-sn-glycero-3-phosphate + ADP + H(+). It carries out the reaction 1-O-hexadecyl-2-(5Z,8Z,11Z,14Z-eicosatetraenoyl)-sn-glycerol + ATP = 1-O-hexadecyl-2-(5Z,8Z,11Z,14Z-eicosatetraenoyl)-sn-glycero-3-phosphate + ADP + H(+). The enzyme catalyses 1-O-hexadecyl-2-(9Z-octadecenoyl)-sn-glycerol + ATP = 1-O-hexadecyl-2-(9Z-octadecenoyl)-sn-glycero-3-phosphate + ADP + H(+). The catalysed reaction is 1-O-hexadecyl-sn-glycerol + ATP = 1-O-hexadecyl-sn-glycero-3-phosphate + ADP + H(+). The protein operates within lipid metabolism; glycerolipid metabolism. Stimulated by calcium and phosphatidylserine. Functionally, diacylglycerol kinase that converts diacylglycerol/DAG into phosphatidic acid/phosphatidate/PA and regulates the respective levels of these two bioactive lipids. Thereby, acts as a central switch between the signaling pathways activated by these second messengers with different cellular targets and opposite effects in numerous biological processes. Also plays an important role in the biosynthesis of complex lipids. Can also phosphorylate 1-alkyl-2-acylglycerol in vitro as efficiently as diacylglycerol provided it contains an arachidonoyl group. Also involved in the production of alkyl-lysophosphatidic acid, another bioactive lipid, through the phosphorylation of 1-alkyl-2-acetyl glycerol. The sequence is that of Diacylglycerol kinase alpha (DGKA) from Homo sapiens (Human).